Consider the following 156-residue polypeptide: Small ribosomal subunit protein uS7 (156 aa).

It belongs to the universal ribosomal protein uS7 family. As to quaternary structure, part of the 30S ribosomal subunit. Contacts proteins S9 and S11.

One of the primary rRNA binding proteins, it binds directly to 16S rRNA where it nucleates assembly of the head domain of the 30S subunit. Is located at the subunit interface close to the decoding center, probably blocks exit of the E-site tRNA. This chain is Small ribosomal subunit protein uS7, found in Jannaschia sp. (strain CCS1).